Reading from the N-terminus, the 849-residue chain is Envelope glycoprotein gp160 (849 aa).

An N-terminal signal peptide occupies residues 1–31 (MRVKGIQRNWQHLWKWGTLILGLVIICSASD). The Extracellular segment spans residues 32–670 (NLWVTVYYGV…ISNWLWYIRI (639 aa)). A disulfide bond links C53 and C73. N87, N129, N137, N142, N153, N185, N195, N232, N239, N260, N274, N287, N299, N329, N341, N354, and N358 each carry an N-linked (GlcNAc...) asparagine; by host glycan. 5 cysteine pairs are disulfide-bonded: C118/C203, C125/C194, C130/C154, C216/C245, and C226/C237. Positions 130–153 (CTNVNSANHTEANNTVENKEEIKN) are V1. The segment at 154–194 (CSFKITTERGGKKKEEYALFYKLDVVPISNGNKTSYRLIHC) is V2. A V3 region spans residues 294–327 (CIRPNNNTRKSIPIGPGQAFYATGDIIGDIRQAH). C294 and C328 form a disulfide bridge. Residues 360–370 (SAGGDLEITTH) are CD4-binding loop. 2 cysteine pairs are disulfide-bonded: C374–C430 and C381–C403. Residues 381 to 403 (CNTSGLFNNNISNINNETITLPC) form a V4 region. N-linked (GlcNAc...) asparagine; by host glycans are attached at residues N382, N390, N396, N433, and N447. V5 regions lie at residues 446–457 (NNDSTEETFRPG) and 448–457 (DSTEETFRPG). The fusion peptide stretch occupies residues 498–518 (AVGLGAVFLGFLGAAGSTMGA). The tract at residues 560–578 (KQLQSRVLAIERYLKDQQL) is immunosuppression. A disulfide bridge links C584 with C590. N-linked (GlcNAc...) asparagine; by host glycosylation is found at N597, N602, N611, and N623. Residues 619-653 (REIHNYTQHIYSLIEESQNQQEKNEQDLLALDKWA) adopt a coiled-coil conformation. The segment at 648 to 669 (ALDKWASLWNWFDISNWLWYIR) is MPER; binding to GalCer. A helical transmembrane segment spans residues 671 to 691 (FIMIVGGLIGLRIVFAVLSIV). The Cytoplasmic segment spans residues 692–849 (NRVRQGYSPL…IRQGLERALL (158 aa)). The YXXL motif; contains endocytosis signal motif lies at 698–701 (YSPL). Residues 709–729 (HQREPDRLGKTEEGGGEQDRD) are disordered. C750 is lipidated: S-palmitoyl cysteine; by host. Residues 848 to 849 (LL) carry the Di-leucine internalization motif motif.

It belongs to the HIV-1 env protein family. The mature envelope protein (Env) consists of a homotrimer of non-covalently associated gp120-gp41 heterodimers. The resulting complex protrudes from the virus surface as a spike. There seems to be as few as 10 spikes on the average virion. Interacts with host CD4, CCR5 and CXCR4. Gp120 also interacts with the C-type lectins CD209/DC-SIGN and CLEC4M/DC-SIGNR (collectively referred to as DC-SIGN(R)). Gp120 and gp41 interact with GalCer. Gp120 interacts with host ITGA4/ITGB7 complex; on CD4+ T-cells, this interaction results in rapid activation of integrin ITGAL/LFA-1, which facilitates efficient cell-to-cell spreading of HIV-1. Gp120 interacts with cell-associated heparan sulfate; this interaction increases virus infectivity on permissive cells and may be involved in infection of CD4- cells. In terms of assembly, the mature envelope protein (Env) consists of a homotrimer of non-covalently associated gp120-gp41 heterodimers. The resulting complex protrudes from the virus surface as a spike. There seems to be as few as 10 spikes on the average virion. Post-translationally, highly glycosylated by host. The high number of glycan on the protein is reffered to as 'glycan shield' because it contributes to hide protein sequence from adaptive immune system. Palmitoylation of the transmembrane protein and of Env polyprotein (prior to its proteolytic cleavage) is essential for their association with host cell membrane lipid rafts. Palmitoylation is therefore required for envelope trafficking to classical lipid rafts, but not for viral replication. In terms of processing, specific enzymatic cleavages in vivo yield mature proteins. Envelope glycoproteins are synthesized as an inactive precursor that is heavily N-glycosylated and processed likely by host cell furin in the Golgi to yield the mature SU and TM proteins. The cleavage site between SU and TM requires the minimal sequence [KR]-X-[KR]-R. About 2 of the 9 disulfide bonds of gp41 are reduced by P4HB/PDI, following binding to CD4 receptor.

The protein resides in the virion membrane. It localises to the host cell membrane. The protein localises to the host endosome membrane. Functionally, oligomerizes in the host endoplasmic reticulum into predominantly trimers. In a second time, gp160 transits in the host Golgi, where glycosylation is completed. The precursor is then proteolytically cleaved in the trans-Golgi and thereby activated by cellular furin or furin-like proteases to produce gp120 and gp41. In terms of biological role, attaches the virus to the host lymphoid cell by binding to the primary receptor CD4. This interaction induces a structural rearrangement creating a high affinity binding site for a chemokine coreceptor like CXCR4 and/or CCR5. Acts as a ligand for CD209/DC-SIGN and CLEC4M/DC-SIGNR, which are respectively found on dendritic cells (DCs), and on endothelial cells of liver sinusoids and lymph node sinuses. These interactions allow capture of viral particles at mucosal surfaces by these cells and subsequent transmission to permissive cells. HIV subverts the migration properties of dendritic cells to gain access to CD4+ T-cells in lymph nodes. Virus transmission to permissive T-cells occurs either in trans (without DCs infection, through viral capture and transmission), or in cis (following DCs productive infection, through the usual CD4-gp120 interaction), thereby inducing a robust infection. In trans infection, bound virions remain infectious over days and it is proposed that they are not degraded, but protected in non-lysosomal acidic organelles within the DCs close to the cell membrane thus contributing to the viral infectious potential during DCs' migration from the periphery to the lymphoid tissues. On arrival at lymphoid tissues, intact virions recycle back to DCs' cell surface allowing virus transmission to CD4+ T-cells. Acts as a class I viral fusion protein. Under the current model, the protein has at least 3 conformational states: pre-fusion native state, pre-hairpin intermediate state, and post-fusion hairpin state. During fusion of viral and target intracellular membranes, the coiled coil regions (heptad repeats) assume a trimer-of-hairpins structure, positioning the fusion peptide in close proximity to the C-terminal region of the ectodomain. The formation of this structure appears to drive apposition and subsequent fusion of viral and target cell membranes. Complete fusion occurs in host cell endosomes and is dynamin-dependent, however some lipid transfer might occur at the plasma membrane. The virus undergoes clathrin-dependent internalization long before endosomal fusion, thus minimizing the surface exposure of conserved viral epitopes during fusion and reducing the efficacy of inhibitors targeting these epitopes. Membranes fusion leads to delivery of the nucleocapsid into the cytoplasm. The protein is Envelope glycoprotein gp160 of Human immunodeficiency virus type 1 group M subtype G (isolate 92NG083) (HIV-1).